Consider the following 473-residue polypeptide: Ribulose bisphosphate carboxylase large chain (473 aa).

A propeptide spanning residues 1-2 (MS) is cleaved from the precursor. Proline 3 is modified (N-acetylproline). Residue lysine 14 is modified to N6,N6,N6-trimethyllysine. 2 residues coordinate substrate: asparagine 123 and threonine 173. Lysine 175 serves as the catalytic Proton acceptor. A substrate-binding site is contributed by lysine 177. Mg(2+) contacts are provided by lysine 201, aspartate 203, and glutamate 204. An N6-carboxylysine modification is found at lysine 201. The active-site Proton acceptor is histidine 294. Substrate-binding residues include arginine 295, histidine 327, and serine 379.

The protein belongs to the RuBisCO large chain family. Type I subfamily. Heterohexadecamer of 8 large chains and 8 small chains; disulfide-linked. The disulfide link is formed within the large subunit homodimers. Requires Mg(2+) as cofactor. Post-translationally, the disulfide bond which can form in the large chain dimeric partners within the hexadecamer appears to be associated with oxidative stress and protein turnover.

It is found in the plastid. It localises to the chloroplast. It carries out the reaction 2 (2R)-3-phosphoglycerate + 2 H(+) = D-ribulose 1,5-bisphosphate + CO2 + H2O. The enzyme catalyses D-ribulose 1,5-bisphosphate + O2 = 2-phosphoglycolate + (2R)-3-phosphoglycerate + 2 H(+). In terms of biological role, ruBisCO catalyzes two reactions: the carboxylation of D-ribulose 1,5-bisphosphate, the primary event in carbon dioxide fixation, as well as the oxidative fragmentation of the pentose substrate in the photorespiration process. Both reactions occur simultaneously and in competition at the same active site. This Vigna unguiculata (Cowpea) protein is Ribulose bisphosphate carboxylase large chain.